Here is a 429-residue protein sequence, read N- to C-terminus: Proton/sodium-glutamate symport protein (429 aa).

Residues 1–5 (MKRIK) are Cytoplasmic-facing. A helical membrane pass occupies residues 6-26 (FGLATQIFVGLILGVIVGVIW). The Extracellular portion of the chain corresponds to 27 to 45 (YGNPALPTYLQPIGDLFLR). Residues 46-66 (LIKMIVIPIVVSSLIIGVAGA) form a helical membrane-spanning segment. The Cytoplasmic portion of the chain corresponds to 67–79 (GNGKQVGKLGFRT). The chain crosses the membrane as a helical span at residues 80–100 (ILYFEIITTFAIILGLALANI). The Extracellular segment spans residues 101-150 (FHPGTGVNIHEAQKSDISQYVETEKEQSNKSVAETFLHIVPTNFFQSLVE). The chain crosses the membrane as a helical span at residues 151–171 (GDLLAIICFTVLFALGISAIG). At 172 to 190 (ERGKPVLAFFEGVSHAMFH) the chain is on the cytoplasmic side. A helical transmembrane segment spans residues 191-211 (VVNLVMKVAPFGVFALIGVTV). Residues 212-224 (SKFGLGSLISLGK) lie on the Extracellular side of the membrane. Residues 225–245 (LVGLVYVALAFFLIVIFGIVA) traverse the membrane as a helical segment. A topological domain (cytoplasmic) is located at residue lysine 246. The chain crosses the membrane as a helical span at residues 247 to 267 (IAGISIFKFLAYMKDEILLAF). Residues 268 to 290 (STSSSETVLPRIMEKMEKIGCPK) lie on the Extracellular side of the membrane. Residues 291–311 (GIVSFVIPIGYTFNLDGSVLY) traverse the membrane as a helical segment. The Cytoplasmic portion of the chain corresponds to 312–321 (QSIAALFLAQ). A helical membrane pass occupies residues 322–342 (VYGIDLTIWHQITLVLVLMVT). Over 343–353 (SKGMAAVPGTS) the chain is Extracellular. The helical transmembrane segment at 354–374 (FVVLLATLGTIGVPAEGLAFI) threads the bilayer. Topologically, residues 375-429 (AGVDRIMDMARTVVNLTGNALAAVVMSKWEGMFNPAKAETVMSQSKTEQNATISG) are cytoplasmic.

The protein belongs to the dicarboxylate/amino acid:cation symporter (DAACS) (TC 2.A.23) family. As to quaternary structure, homotrimer. Interacts with FloT.

It is found in the cell membrane. The protein resides in the membrane raft. In terms of biological role, this carrier protein is part of the Na(+)-dependent, binding-protein-independent glutamate-aspartate transport system. The polypeptide is Proton/sodium-glutamate symport protein (gltT) (Bacillus subtilis (strain 168)).